A 327-amino-acid polypeptide reads, in one-letter code: Vacuolar protein sorting-associated protein 26A (327 aa).

The segment at R306–M327 is disordered. S315 is modified (phosphoserine). The segment covering P316–M327 has biased composition (polar residues).

This sequence belongs to the VPS26 family. In terms of assembly, component of the heterotrimeric retromer cargo-selective complex (CSC), also described as vacuolar protein sorting subcomplex (VPS), formed by VPS26 (VPS26A or VPS26B), VPS29 and VPS35. The CSC has a highly elongated structure with VPS26 and VPS29 binding independently at opposite distal ends of VPS35 as central platform. The CSC is believed to associate with variable sorting nexins to form functionally distinct retromer complex variants. The originally described retromer complex (also called SNX-BAR retromer) is a pentamer containing the CSC and a heterodimeric membrane-deforming subcomplex formed between SNX1 or SNX2 and SNX5 or SNX6 (also called SNX-BAR subcomplex); the respective CSC and SNX-BAR subcomplexes associate with low affinity. The CSC associates with SNX3 to form a SNX3-retromer complex. The CSC associates with SNX27, the WASH complex and the SNX-BAR subcomplex to form the SNX27-retromer complex. Interacts with VPS29, VPS35, SNX1, SNX2, SNX5, SNX6, SNX3, SNX27, RAB7A, ECPAS, EHD1, WASHC5, SORL1.

The protein resides in the cytoplasm. The protein localises to the endosome membrane. It localises to the early endosome. Its function is as follows. Acts as a component of the retromer cargo-selective complex (CSC). The CSC is believed to be the core functional component of retromer or respective retromer complex variants acting to prevent missorting of selected transmembrane cargo proteins into the lysosomal degradation pathway. The recruitment of the CSC to the endosomal membrane involves RAB7A and SNX3. The SNX-BAR retromer mediates retrograde transport of cargo proteins from endosomes to the trans-Golgi network (TGN) and is involved in endosome-to-plasma membrane transport for cargo protein recycling. The SNX3-retromer mediates the retrograde endosome-to-TGN transport of WLS distinct from the SNX-BAR retromer pathway. The SNX27-retromer is believed to be involved in endosome-to-plasma membrane trafficking and recycling of a broad spectrum of cargo proteins. The CSC seems to act as recruitment hub for other proteins, such as the WASH complex and TBC1D5. Required for retrograde transport of lysosomal enzyme receptor IGF2R. Required to regulate transcytosis of the polymeric immunoglobulin receptor (pIgR-pIgA). Required for the endosomal localization of WASHC2A (indicative for the WASH complex). Required for the endosomal localization of TBC1D5. Mediates retromer cargo recognition of SORL1 and is involved in trafficking of SORL1 implicated in sorting and processing of APP. Involved in retromer-independent lysosomal sorting of F2R. Involved in recycling of ADRB2. Enhances the affinity of SNX27 for PDZ-binding motifs in cargo proteins. The protein is Vacuolar protein sorting-associated protein 26A of Homo sapiens (Human).